We begin with the raw amino-acid sequence, 428 residues long: Putative zinc metalloprotease SAR1238 (428 aa).

Histidine 21 contributes to the Zn(2+) binding site. Glutamate 22 is a catalytic residue. Residue histidine 25 coordinates Zn(2+). The next 4 helical transmembrane spans lie at 172-194 (FLTL…IGLA), 309-331 (GSTY…GFSF), 352-374 (IISL…LIPI), and 401-420 (TTII…LVTW). Residues 186 to 269 (ALVLFIGLAY…TKSVELTPKK (84 aa)) enclose the PDZ domain.

This sequence belongs to the peptidase M50B family. It depends on Zn(2+) as a cofactor.

The protein resides in the cell membrane. The polypeptide is Putative zinc metalloprotease SAR1238 (Staphylococcus aureus (strain MRSA252)).